A 124-amino-acid polypeptide reads, in one-letter code: Large ribosomal subunit protein bL12 (124 aa).

The protein belongs to the bacterial ribosomal protein bL12 family. As to quaternary structure, homodimer. Part of the ribosomal stalk of the 50S ribosomal subunit. Forms a multimeric L10(L12)X complex, where L10 forms an elongated spine to which 2 to 4 L12 dimers bind in a sequential fashion. Binds GTP-bound translation factors.

Forms part of the ribosomal stalk which helps the ribosome interact with GTP-bound translation factors. Is thus essential for accurate translation. In Hamiltonella defensa subsp. Acyrthosiphon pisum (strain 5AT), this protein is Large ribosomal subunit protein bL12.